Here is a 472-residue protein sequence, read N- to C-terminus: Glutamate--tRNA ligase (472 aa).

The 'HIGH' region signature appears at 8-18 (PSPTGFLHIGS). The short motif at 239–243 (KLSKR) is the 'KMSKS' region element. An ATP-binding site is contributed by Lys242.

Belongs to the class-I aminoacyl-tRNA synthetase family. Glutamate--tRNA ligase type 1 subfamily. In terms of assembly, monomer.

The protein localises to the cytoplasm. It catalyses the reaction tRNA(Glu) + L-glutamate + ATP = L-glutamyl-tRNA(Glu) + AMP + diphosphate. Functionally, catalyzes the attachment of glutamate to tRNA(Glu) in a two-step reaction: glutamate is first activated by ATP to form Glu-AMP and then transferred to the acceptor end of tRNA(Glu). This Solibacter usitatus (strain Ellin6076) protein is Glutamate--tRNA ligase.